We begin with the raw amino-acid sequence, 297 residues long: ER membrane protein complex subunit 2 (297 aa).

Alanine 2 is modified (N-acetylalanine). TPR repeat units lie at residues 87-120 (HRVK…DPTN), 155-188 (QEAW…NPHN), and 192-225 (CQQY…NNRN). Lysine 255 is subject to N6-acetyllysine.

This sequence belongs to the EMC2 family. As to quaternary structure, component of the ER membrane protein complex (EMC). Interacts with WNK1 (via amphipathic alpha-helix region); promoting the ER membrane protein complex assembly by preventing EMC2 ubiquitination. Ubiquitinated when soluble in the cytoplasm, leading to its degradation by the proteasome. Interaction with EMC2 prevents its ubiquitination and degradation.

Its subcellular location is the endoplasmic reticulum membrane. In terms of biological role, part of the endoplasmic reticulum membrane protein complex (EMC) that enables the energy-independent insertion into endoplasmic reticulum membranes of newly synthesized membrane proteins. Preferentially accommodates proteins with transmembrane domains that are weakly hydrophobic or contain destabilizing features such as charged and aromatic residues. Involved in the cotranslational insertion of multi-pass membrane proteins in which stop-transfer membrane-anchor sequences become ER membrane spanning helices. It is also required for the post-translational insertion of tail-anchored/TA proteins in endoplasmic reticulum membranes. By mediating the proper cotranslational insertion of N-terminal transmembrane domains in an N-exo topology, with translocated N-terminus in the lumen of the ER, controls the topology of multi-pass membrane proteins like the G protein-coupled receptors. By regulating the insertion of various proteins in membranes, it is indirectly involved in many cellular processes. The chain is ER membrane protein complex subunit 2 from Homo sapiens (Human).